Reading from the N-terminus, the 477-residue chain is MNVLFAVSEAFPFAKTGGLADVAYSLPKALRKLGVDIRVIMPKYGDIPSDYTTKMKHLCHFTVPVGWRNQYCGIEYLNFEGVPFYFIDNEYYFKRPGYYGYYDDGERFSYFSRAVCEAIYHLDFDVDIIHVNDWHTSVIPVLLKAHYSHSPKHQKIKTVLTIHNLRYQGVFPKEVMYDLLSLPDEYFDENKLKFYDAISFLKGGIIFADKVVTVSKTYANEIRTLSHGEGLHGLLSGIGEKLVGIVNGIDYEVCNPATDKLIFVNYDANTFESRKKENKFRLQQMLNLPVSDDIVLIGMVSRLTKEKGIDLIERILSRLLTLPVQLVILGAGDYHYEQMFKYYAIAYPSKVSANICYSEELARKIYAGSDIYLMPSLTEPCGISQLIAMRYGTVPIVRETGGLKDTVKPYNQFTGEGWGFSFANYDPAELFAIIKYALSIYSDKAQWRSIVHQAMTRDNSWNASAGEYNRVYEQLLK.

ADP-alpha-D-glucose is bound at residue Lys15.

Belongs to the glycosyltransferase 1 family. Bacterial/plant glycogen synthase subfamily.

The catalysed reaction is [(1-&gt;4)-alpha-D-glucosyl](n) + ADP-alpha-D-glucose = [(1-&gt;4)-alpha-D-glucosyl](n+1) + ADP + H(+). The protein operates within glycan biosynthesis; glycogen biosynthesis. Functionally, synthesizes alpha-1,4-glucan chains using ADP-glucose. This chain is Glycogen synthase, found in Caldicellulosiruptor saccharolyticus (strain ATCC 43494 / DSM 8903 / Tp8T 6331).